The following is a 101-amino-acid chain: UPF0473 protein SUB1774 (101 aa).

It belongs to the UPF0473 family.

The protein is UPF0473 protein SUB1774 of Streptococcus uberis (strain ATCC BAA-854 / 0140J).